A 234-amino-acid polypeptide reads, in one-letter code: Lipoprotein-releasing system ATP-binding protein LolD (234 aa).

Residues 7–234 (LLCNNLCKKY…QDELTVTGAL (228 aa)) enclose the ABC transporter domain. Residue 43-50 (GSSGSGKS) participates in ATP binding.

The protein belongs to the ABC transporter superfamily. Lipoprotein translocase (TC 3.A.1.125) family. The complex is composed of two ATP-binding proteins (LolD) and two transmembrane proteins (LolC and LolE).

Its subcellular location is the cell inner membrane. Its function is as follows. Part of the ABC transporter complex LolCDE involved in the translocation of mature outer membrane-directed lipoproteins, from the inner membrane to the periplasmic chaperone, LolA. Responsible for the formation of the LolA-lipoprotein complex in an ATP-dependent manner. The protein is Lipoprotein-releasing system ATP-binding protein LolD of Photorhabdus laumondii subsp. laumondii (strain DSM 15139 / CIP 105565 / TT01) (Photorhabdus luminescens subsp. laumondii).